The chain runs to 90 residues: Probable Fe(2+)-trafficking protein (90 aa).

It belongs to the Fe(2+)-trafficking protein family.

Could be a mediator in iron transactions between iron acquisition and iron-requiring processes, such as synthesis and/or repair of Fe-S clusters in biosynthetic enzymes. The polypeptide is Probable Fe(2+)-trafficking protein (Stutzerimonas stutzeri (strain A1501) (Pseudomonas stutzeri)).